An 89-amino-acid polypeptide reads, in one-letter code: UPF0147 protein Saci_0891 (89 aa).

This sequence belongs to the UPF0147 family.

This is UPF0147 protein Saci_0891 from Sulfolobus acidocaldarius (strain ATCC 33909 / DSM 639 / JCM 8929 / NBRC 15157 / NCIMB 11770).